Reading from the N-terminus, the 381-residue chain is Chymosin (381 aa).

An N-terminal signal peptide occupies residues 1–16 (MRCLVVLLAVFALSQG). Positions 17–58 (AEITRIPLYKGKSLRKALKEHGLLEDFLQKQQYGISSKYSGF) are cleaved as a propeptide — activation peptide. The Peptidase A1 domain maps to 74–378 (YFGKIYLGTP…DRANNLVGLA (305 aa)). Aspartate 92 is a catalytic residue. Cystine bridges form between cysteine 105-cysteine 110 and cysteine 265-cysteine 269. Residue aspartate 274 is part of the active site. Cysteine 308 and cysteine 341 are oxidised to a cystine.

Belongs to the peptidase A1 family. In terms of assembly, monomer.

The catalysed reaction is Broad specificity similar to that of pepsin A. Clots milk by cleavage of a single 104-Ser-Phe-|-Met-Ala-107 bond in kappa-chain of casein.. Functionally, chymosin is synthesized in the mucosa of the abomasum (fourth stomach) of young (unweaned) ruminants. The enzyme hydrolyzes casein to paracasein. The polypeptide is Chymosin (CYM) (Bos taurus (Bovine)).